The following is a 322-amino-acid chain: Ribosomal RNA small subunit methyltransferase H (322 aa).

S-adenosyl-L-methionine-binding positions include 34 to 36 (GGH), D59, F86, D112, and Q119.

Belongs to the methyltransferase superfamily. RsmH family.

It localises to the cytoplasm. It catalyses the reaction cytidine(1402) in 16S rRNA + S-adenosyl-L-methionine = N(4)-methylcytidine(1402) in 16S rRNA + S-adenosyl-L-homocysteine + H(+). In terms of biological role, specifically methylates the N4 position of cytidine in position 1402 (C1402) of 16S rRNA. The polypeptide is Ribosomal RNA small subunit methyltransferase H (Chlorobium limicola (strain DSM 245 / NBRC 103803 / 6330)).